The chain runs to 472 residues: Probable diguanylate cyclase DgcF (472 aa).

8 helical membrane passes run S21–V41, L44–L64, V90–V110, L128–V148, F167–P187, I198–F218, L237–I257, and L273–N293. Residues Q330–Y467 enclose the GGDEF domain. The Mg(2+) site is built by D338 and I339. Substrate contacts are provided by N346, H351, and D355. Position 381 (E381) interacts with Mg(2+).

Homodimer. Requires Mg(2+) as cofactor.

It localises to the cell membrane. It catalyses the reaction 2 GTP = 3',3'-c-di-GMP + 2 diphosphate. Its pathway is purine metabolism; 3',5'-cyclic di-GMP biosynthesis. Its function is as follows. Catalyzes the synthesis of cyclic-di-GMP (c-di-GMP) via the condensation of 2 GTP molecules. The chain is Probable diguanylate cyclase DgcF from Escherichia coli O157:H7.